Consider the following 1384-residue polypeptide: ABC transporter C family member 2 (1384 aa).

One can recognise an ABC transmembrane type-1 1 domain in the interval 104 to 388 (NKISVATKIF…LPEAIHRALS (285 aa)). 5 helical membrane-spanning segments follow: residues 112–132 (IFVAIVSILSPLCLKYFIYYI), 140–160 (TFKFGFLLCVLLFLSSLSLTL), 226–246 (IFVFPFQILALLILLCWIVGL), 247–267 (SGLVGFGVMVVSIPLCTFLST), and 333–353 (MITQVTSALVLVATFSTYALT). One can recognise an ABC transporter 1 domain in the interval 505–724 (IEYDGAVQPS…GIDFESIMKT (220 aa)). 537–544 (GIVGSGKT) lines the ATP pocket. A disordered region spans residues 729 to 756 (IDENDQSSTSTTDKKSSTSSSSSELKKS). Low complexity predominate over residues 735-756 (SSTSTTDKKSSTSSSSSELKKS). A run of 5 helical transmembrane segments spans residues 813 to 833 (LFFLTCALYFISQIIFQLSDF), 852 to 872 (ILYYCIFIGAFIVFLVVRYFM), 941 to 961 (LFMMIYITPLISIPFAILVVV), 1036 to 1056 (GIRLEFITALIVFFTAFSSLF), and 1061 to 1081 (GFSVLAVTTALGICSYLNWTI). Positions 814–1093 (FFLTCALYFI…MTELEVKMNS (280 aa)) constitute an ABC transmembrane type-1 2 domain. The ABC transporter 2 domain occupies 1137–1371 (VEFKNVEIKY…EGSRFKKLVK (235 aa)). 1171–1178 (GRTGAGKS) lines the ATP pocket.

The protein belongs to the ABC transporter superfamily. ABCC family. Conjugate transporter (TC 3.A.1.208) subfamily.

It is found in the membrane. This Dictyostelium discoideum (Social amoeba) protein is ABC transporter C family member 2 (abcC2).